A 395-amino-acid chain; its full sequence is uncharacterized protein (395 aa).

10 helical membrane passes run I19–I39, V49–L69, L87–G107, L137–T157, Y172–I192, T206–A226, L252–G272, L279–A299, G311–I331, and V359–I379.

Belongs to the chloride channel (TC 2.A.49) family.

It localises to the cell membrane. This is an uncharacterized protein from Methanocaldococcus jannaschii (strain ATCC 43067 / DSM 2661 / JAL-1 / JCM 10045 / NBRC 100440) (Methanococcus jannaschii).